Consider the following 616-residue polypeptide: Chaperone protein HscA (616 aa).

Belongs to the heat shock protein 70 family.

In terms of biological role, chaperone involved in the maturation of iron-sulfur cluster-containing proteins. Has a low intrinsic ATPase activity which is markedly stimulated by HscB. Involved in the maturation of IscU. In Salmonella heidelberg (strain SL476), this protein is Chaperone protein HscA.